A 660-amino-acid chain; its full sequence is MRTEQADDVLVLENIVRKFSAGETFVTVLKDINLTIKRGEMVAIVGASGSGKSTLMNILGCLDRPSSGRYWISGKKTACLSADELSALRRNHFGFIFQRYHLLSELTALGNVEIPAIYAGCSPQIRKKRAQDLLIRLGMGDRINHRPNQLSGGQQQRVSIARALMNNAEVILADEPTGALDKKSGQEVLRILDELHQEGRTIVIVTHDMQVAERAERIIEISDGEIIADNVAKVAKTKAKGQALQGKQNPKNQKTLGFFRSFAERFREAFVMALLAMNAHRMRTFLTMLGVIIGIAAIIAMVALGTGTREKILENFKSLGSNTLTILPGKSLSDPQSDKITSLVEADAEALSRLPYVSGVTPQVSASSTVRFGAVEVDAVIVGVGEQFFQTQGLNAVQGRLFDQKSVRDRAVDLVIEKEALSVLFPHSRESPVGKVVQVGQVPARIVGVIDQQHNGGMSNTLQVYLPYTTVQTRFVGTTQVRAITVKIADDIDSHLAESMVRRFLIMRHGEEDFFIRNSQLFRDRIMESTHILTLLVSSIAAISLIVGGIGVMNIMLVTVSERINEIGVRMAVGARQSDILQQFLIEAILVCIIGGGVGILFGLSIGGLFVLFEAPIHLIYTIDSIIISLTFSTLIGICFGFSPARQASRLDPVVALSRD.

The ABC transporter domain maps to 10–248 (LVLENIVRKF…AKGQALQGKQ (239 aa)). 46–53 (GASGSGKS) provides a ligand contact to ATP. The next 4 helical transmembrane spans lie at 285–305 (FLTM…VALG), 532–552 (ILTL…GIGV), 593–613 (IIGG…FVLF), and 625–645 (SIII…FSPA).

This sequence belongs to the ABC transporter superfamily. Macrolide exporter (TC 3.A.1.122) family. In terms of assembly, homodimer.

Its subcellular location is the cell inner membrane. In terms of biological role, non-canonical ABC transporter that contains transmembrane domains (TMD), which form a pore in the inner membrane, and an ATP-binding domain (NBD), which is responsible for energy generation. Confers resistance against macrolides. This Bartonella quintana (strain Toulouse) (Rochalimaea quintana) protein is Macrolide export ATP-binding/permease protein MacB.